The primary structure comprises 907 residues: Coatomer subunit beta'-1 (907 aa).

9 WD repeats span residues glutamine 13–serine 52, valine 55–valine 94, alanine 97–glutamine 136, glycine 140–threonine 180, glycine 183–threonine 224, glycine 227–threonine 266, tyrosine 269–aspartate 309, serine 351–phenylalanine 389, and arginine 461–glutamate 501. Composition is skewed to acidic residues over residues glutamate 850–leucine 866 and serine 874–glutamate 887. A disordered region spans residues glutamate 850–glutamate 887.

The protein belongs to the WD repeat COPB2 family. As to quaternary structure, oligomeric complex that consists of at least the alpha, beta, beta', gamma, delta, epsilon and zeta subunits.

It localises to the cytoplasm. The protein resides in the golgi apparatus membrane. It is found in the cytoplasmic vesicle. Its subcellular location is the COPI-coated vesicle membrane. Its function is as follows. The coatomer is a cytosolic protein complex that binds to dilysine motifs and reversibly associates with Golgi non-clathrin-coated vesicles, which further mediate biosynthetic protein transport from the ER, via the Golgi up to the trans Golgi network. Coatomer complex is required for budding from Golgi membranes, and is essential for the retrograde Golgi-to-ER transport of dilysine-tagged proteins. The protein is Coatomer subunit beta'-1 of Oryza sativa subsp. japonica (Rice).